Consider the following 98-residue polypeptide: Keratin-associated protein 3-3 (98 aa).

Position 2 is an N-acetylalanine (A2). Repeat copies occupy residues 3 to 7 (CCAPL), 8 to 12 (CCSAR), and 47 to 51 (CCDNC). Residues 3–59 (CCAPLCCSARTSPATTICSSDKFCRCGVCLPSTCPHTVWLLEPTCCDNCPPPCHIPQ) form a 3 X 5 AA repeats of C-C-X(3) region.

This sequence belongs to the KRTAP type 3 family. As to quaternary structure, interacts with hair keratins.

In the hair cortex, hair keratin intermediate filaments are embedded in an interfilamentous matrix, consisting of hair keratin-associated proteins (KRTAP), which are essential for the formation of a rigid and resistant hair shaft through their extensive disulfide bond cross-linking with abundant cysteine residues of hair keratins. The matrix proteins include the high-sulfur and high-glycine-tyrosine keratins. In Bos taurus (Bovine), this protein is Keratin-associated protein 3-3.